The primary structure comprises 274 residues: NH(3)-dependent NAD(+) synthetase (274 aa).

An ATP-binding site is contributed by 46–53 (GISGGQDS). Aspartate 52 provides a ligand contact to Mg(2+). Arginine 140 provides a ligand contact to deamido-NAD(+). Threonine 160 lines the ATP pocket. Glutamate 165 provides a ligand contact to Mg(2+). The deamido-NAD(+) site is built by lysine 173 and aspartate 180. Residues lysine 189 and threonine 211 each contribute to the ATP site. Residue 260-261 (HK) coordinates deamido-NAD(+).

The protein belongs to the NAD synthetase family. In terms of assembly, homodimer.

It carries out the reaction deamido-NAD(+) + NH4(+) + ATP = AMP + diphosphate + NAD(+) + H(+). It functions in the pathway cofactor biosynthesis; NAD(+) biosynthesis; NAD(+) from deamido-NAD(+) (ammonia route): step 1/1. In terms of biological role, catalyzes the ATP-dependent amidation of deamido-NAD to form NAD. Uses ammonia as a nitrogen source. This chain is NH(3)-dependent NAD(+) synthetase, found in Streptococcus pneumoniae (strain 70585).